The following is a 494-amino-acid chain: Probable malate:quinone oxidoreductase (494 aa).

It belongs to the MQO family. Requires FAD as cofactor.

The catalysed reaction is (S)-malate + a quinone = a quinol + oxaloacetate. Its pathway is carbohydrate metabolism; tricarboxylic acid cycle; oxaloacetate from (S)-malate (quinone route): step 1/1. The sequence is that of Probable malate:quinone oxidoreductase from Helicobacter hepaticus (strain ATCC 51449 / 3B1).